Consider the following 379-residue polypeptide: MKILRKNHPLFKIINHSFIDLPTPSNISSWWNFGSLLGMCLMIQILTGLFLAMHYTSDTTTAFSSVAHICRDVNYGWLIRYLHANGASMFFICLFIHVGRGIYYGSYVLSETWNIGIILFLTTMATAFVGYVLPWGQMSFWGATVITNLLSAIPYIGSTLVEWIWGGFSVDKATLTRFFAFHFILPFIITAFVLVHLLFLHETGSNNPSGLNSNSDKIPFHPYYTIKDLLGILFLLTALMILALFFPDILGDPDNYTPANPLNTPAHIKPEWYFLFAYAILRSIPNKLGGVLALLLSILILMAFPLLNTSKQHGLIFRPITQTIYWILIANLLVLTWIGGQPVEYPFTMIGQIASITYFAIILILMPVSNTIENNIIKL.

Helical transmembrane passes span 33-53 (FGSL…FLAM), 77-98 (WLIR…FIHV), 113-133 (WNIG…GYVL), and 178-198 (FFAF…VHLL). 2 residues coordinate heme b: His-83 and His-97. His-182 and His-196 together coordinate heme b. Residue His-201 coordinates a ubiquinone. Transmembrane regions (helical) follow at residues 226–246 (IKDL…ALFF), 288–308 (LGGV…PLLN), 320–340 (ITQT…WIGG), and 347–367 (FTMI…ILMP).

This sequence belongs to the cytochrome b family. The cytochrome bc1 complex contains 11 subunits: 3 respiratory subunits (MT-CYB, CYC1 and UQCRFS1), 2 core proteins (UQCRC1 and UQCRC2) and 6 low-molecular weight proteins (UQCRH/QCR6, UQCRB/QCR7, UQCRQ/QCR8, UQCR10/QCR9, UQCR11/QCR10 and a cleavage product of UQCRFS1). This cytochrome bc1 complex then forms a dimer. Requires heme b as cofactor.

The protein localises to the mitochondrion inner membrane. Component of the ubiquinol-cytochrome c reductase complex (complex III or cytochrome b-c1 complex) that is part of the mitochondrial respiratory chain. The b-c1 complex mediates electron transfer from ubiquinol to cytochrome c. Contributes to the generation of a proton gradient across the mitochondrial membrane that is then used for ATP synthesis. This Akodon dolores (Dolorous grass mouse) protein is Cytochrome b (MT-CYB).